We begin with the raw amino-acid sequence, 120 residues long: Small ribosomal subunit protein uS13 (120 aa).

The segment at 93–120 (RRGLPCRGQKTKTNARTRKGKRKTVGAA) is disordered.

It belongs to the universal ribosomal protein uS13 family. As to quaternary structure, part of the 30S ribosomal subunit. Forms a loose heterodimer with protein S19. Forms two bridges to the 50S subunit in the 70S ribosome.

In terms of biological role, located at the top of the head of the 30S subunit, it contacts several helices of the 16S rRNA. In the 70S ribosome it contacts the 23S rRNA (bridge B1a) and protein L5 of the 50S subunit (bridge B1b), connecting the 2 subunits; these bridges are implicated in subunit movement. Contacts the tRNAs in the A and P-sites. The polypeptide is Small ribosomal subunit protein uS13 (Sulfurovum sp. (strain NBC37-1)).